A 103-amino-acid chain; its full sequence is Matrix Gla protein (103 aa).

The signal sequence occupies residues 1 to 19 (MKSLILLAILAALAVVTLC). Glutamate 21 carries the 4-carboxyglutamate modification. Phosphoserine is present on residues serine 22, serine 25, and serine 28. The 47-residue stretch at 51–97 (RAKVQERIRERSKPVHELNREACDDYRLCERYAMVYGYNAAYNRYFR) folds into the Gla domain. 4-carboxyglutamate occurs at positions 56, 60, 67, and 71. Cysteine 73 and cysteine 79 are joined by a disulfide. Residues 97 to 103 (RKRRGTK) constitute a propeptide, removed in mature form; probably by carboxypeptidase N.

Belongs to the osteocalcin/matrix Gla protein family. Requires vitamin K-dependent gamma-carboxylation for its function.

The protein localises to the secreted. In terms of biological role, associates with the organic matrix of bone and cartilage. Thought to act as an inhibitor of bone formation. The chain is Matrix Gla protein (MGP) from Homo sapiens (Human).